We begin with the raw amino-acid sequence, 862 residues long: Linoleate 9S-lipoxygenase 1 (862 aa).

Residues 44 to 171 (FGAATDIVGG…SYKRDRIFFA (128 aa)) enclose the PLAT domain. The Lipoxygenase domain occupies 174–862 (TYLPNETPAS…FRGIPNSISI (689 aa)). Residues 225–257 (KNLARTTLGGSSDFPYPRRGRTGRKSTRKDPKC) are disordered. A compositionally biased stretch (basic residues) spans 242 to 251 (RRGRTGRKST). Residues His522, His527, His713, Asn717, and Ile862 each contribute to the Fe cation site.

It belongs to the lipoxygenase family. In terms of assembly, monomer. Fe cation is required as a cofactor.

The protein resides in the cytoplasm. It catalyses the reaction (9Z,12Z)-octadecadienoate + O2 = (13S)-hydroperoxy-(9Z,11E)-octadecadienoate. The catalysed reaction is (9Z,12Z,15Z)-octadecatrienoate + O2 = (13S)-hydroperoxy-(9Z,11E,15Z)-octadecatrienoate. It carries out the reaction (9Z,12Z)-octadecadienoate + O2 = (9S)-hydroperoxy-(10E,12Z)-octadecadienoate. Its pathway is lipid metabolism; oxylipin biosynthesis. Functionally, plant lipoxygenase may be involved in a number of diverse aspects of plant physiology including growth and development, pest resistance, and senescence or responses to wounding. It catalyzes the hydroperoxidation of lipids containing a cis,cis-1,4-pentadiene structure. The protein is Linoleate 9S-lipoxygenase 1 (LOXA) of Phaseolus vulgaris (Kidney bean).